The sequence spans 426 residues: Histidine--tRNA ligase (426 aa).

The protein belongs to the class-II aminoacyl-tRNA synthetase family.

The protein localises to the cytoplasm. The catalysed reaction is tRNA(His) + L-histidine + ATP = L-histidyl-tRNA(His) + AMP + diphosphate + H(+). The protein is Histidine--tRNA ligase of Saccharolobus islandicus (strain M.16.27) (Sulfolobus islandicus).